We begin with the raw amino-acid sequence, 233 residues long: Protein TIPIN homolog (233 aa).

Residues 1 to 14 (MDEMEDFFENDELD) show a composition bias toward acidic residues. 2 disordered regions span residues 1–39 (MDEM…RVVE) and 134–233 (GETG…NNDW). 2 stretches are compositionally biased toward basic and acidic residues: residues 163 to 190 (DLFK…KTAE) and 197 to 216 (EEYR…AKEA). Residues 217 to 227 (ADEDALMEDFG) show a composition bias toward acidic residues.

The protein belongs to the CSM3 family.

It localises to the cytoplasm. It is found in the nucleus. In terms of biological role, required for normal progression of S-phase. Important for cell survival after DNA damage or replication stress. The polypeptide is Protein TIPIN homolog (Caenorhabditis elegans).